Reading from the N-terminus, the 1006-residue chain is MSRPASSTPPGRPQPRRGALTPTLIVVALVVVGFIFFANVWTDVLWYQQLGFFEVFLTENLARIIIFLAGFALMFVAMFYAIRIAYHARPVYAPDSEIRDNLNRYQAQLEPVRRVVMIGLPVLFGLFAGSAAASQWQKVLLFLNQEPFGQNDPQFNLDISFYLMTLPFLGFVTGFLISVVVVAGIAGILTHYLYGSIRIMERGIFTSRAAQIHLAVTGAVFLLLLGVNFWLDRYSSVQNSNGRWAGALYTDVNAVIPTKSILAVAAALVAILFIVAAVIGKWRLPVIGTAMLVITSILAGGVYPWVIQQFQVRPSEQTLERQFIERNISMTRAAYGLDKIQEKRYNATTNATTGALAPDAQTTANIRLLDPNLISDAFSQLEQYRPYYQFPSALNVDRYEVDGKVQDTVIAVRELNPDGLSANQQSWLNRHVVYTHGYGVVAAKGNKFTADGKPEFLQAGIPSTGVLGNDSTYQPRIYFGENSPEYSIVGAPEGSPHREQDRPAGKEGDGETQYTFTGNGGPNVGSFFNKVLYAIKFQSSDLLLSDGVNAESQILYDRNPRDRVEKVAPYLTVDGNAYPAVVDGRVKWIVDGYTTSQYYPYSQQEQLSAATADSQTTAGRTVALPNSSVNYIRNSVKATVDAYDGSVTLYAWDDQDPVLKAWQNVFPTSLKPYSEMSGALMSHVRYPEDLFKVQRELLGRYHVTQPDNFYTNNDAWSVPNDPTVKEEVKQPPFYMSLQMPDQDKPAFQLTSSFIPQVVNGTARNVLYGFLAADSDAGNQKGVKAESYGQLRLLQIPPEAQVPGPGQAQNKFNSDPTVSQALNLLRQGASAVLNGNLLTLPVGGGLLYVQPVYLRSTGETSYPTLQRVLVAFGDKIGFAPTLDEALNQLFGGQSGAKAGDFANNGQTPPPAAGGSTPPATGGTDAKAELKAALDEANAAIRAGQEALAKGDFAAYGEQQKKLSAALQKAIDAEAKLGSEGASPTPGATTAPTATPSAAATPSPSPSN.

7 helical membrane-spanning segments follow: residues Gly18 to Ala38, Ile64 to Ile84, Val115 to Gln135, Phe168 to Ile188, Gln211 to Leu231, Ser260 to Gly280, and Ile287 to Ile307. 3 disordered regions span residues Gly490–Asn519, Lys896–Asp923, and Leu975–Asn1006. The span at Ser495–Asp509 shows a compositional bias: basic and acidic residues. 2 stretches are compositionally biased toward low complexity: residues Ala911 to Asp923 and Gly979 to Pro1000.

The protein belongs to the UPF0182 family.

The protein resides in the cell membrane. This chain is UPF0182 protein Arth_2749, found in Arthrobacter sp. (strain FB24).